Reading from the N-terminus, the 513-residue chain is Putative thymidine phosphorylase (513 aa).

The protein belongs to the thymidine/pyrimidine-nucleoside phosphorylase family. Type 2 subfamily.

The enzyme catalyses thymidine + phosphate = 2-deoxy-alpha-D-ribose 1-phosphate + thymine. This Rhodopseudomonas palustris (strain BisA53) protein is Putative thymidine phosphorylase.